The primary structure comprises 124 residues: Small ribosomal subunit protein bS6 (124 aa).

The segment at 93-124 (KKAETGPSSMMKTVEREEARKAQQAEYAANNS) is disordered. The span at 105-115 (TVEREEARKAQ) shows a compositional bias: basic and acidic residues.

It belongs to the bacterial ribosomal protein bS6 family.

Binds together with bS18 to 16S ribosomal RNA. This Variovorax paradoxus (strain S110) protein is Small ribosomal subunit protein bS6.